A 756-amino-acid chain; its full sequence is Alpha-1,2-mannosyltransferase MNN26 (756 aa).

Over 1 to 10 the chain is Cytoplasmic; that stretch reads MSLRRLSPSH. A helical membrane pass occupies residues 11–31; it reads LILGTLVLGVIIFNLYVLTST. The Extracellular portion of the chain corresponds to 32 to 756; sequence HEDIKKVKGP…NGKNKQGAAS (725 aa). The segment covering 723–734 has biased composition (polar residues); sequence LGEKSQPKQPEI. The tract at residues 723 to 756 is disordered; that stretch reads LGEKSQPKQPEINNNNNNNNNDDDNGKNKQGAAS.

The protein belongs to the MNN1/MNT family.

Its subcellular location is the golgi apparatus membrane. The protein operates within protein modification; protein glycosylation. Alpha-1,2-mannosyltransferase required for cell wall integrity. Responsible for addition of the first alpha-1,2-linked mannose to form the branches on the mannan backbone of oligosaccharides. Addition of alpha-1,2-mannose is required for stabilization of the alpha-1,6-mannose backbone and hence regulates mannan fibril length; and is important for both immune recognition and virulence. This is Alpha-1,2-mannosyltransferase MNN26 (MNN26) from Candida albicans (strain SC5314 / ATCC MYA-2876) (Yeast).